The chain runs to 433 residues: Putative ankyrin repeat protein R578 (433 aa).

ANK repeat units lie at residues 166 to 195, 197 to 224, 356 to 386, and 388 to 415; these read NKEI…ILSE, DHLI…LSKL, VNPN…DIHS, and PSLI…ICDE.

The chain is Putative ankyrin repeat protein R578 from Acanthamoeba polyphaga mimivirus (APMV).